The following is a 294-amino-acid chain: Non-selective voltage-gated ion channel VDAC2 (294 aa).

Position 2 is an N-acetylalanine (Ala-2). Positions 23 and 31 each coordinate ATP. Lys-31 is subject to N6-acetyllysine; alternate. Lys-31 is modified (N6-succinyllysine; alternate). A Glycyl lysine isopeptide (Lys-Gly) (interchain with G-Cter in ubiquitin); alternate cross-link involves residue Lys-31. The next 2 membrane-spanning stretches (beta stranded) occupy residues 37–46 (LVKLDVKTKS) and 50–58 (VEFSTSGSS). Lys-64 participates in a covalent cross-link: Glycyl lysine isopeptide (Lys-Gly) (interchain with G-Cter in ubiquitin). The chain crosses the membrane as a beta stranded span at residues 65–75 (VTGTLETKYKW). Tyr-78 is modified (phosphotyrosine). The next 3 membrane-spanning stretches (beta stranded) occupy residues 80–87 (LTFTEKWN), 91–100 (TLGTEIAIED), and 106–115 (LKLTFDTTFS). At Thr-118 the chain carries Phosphothreonine. N6-acetyllysine; alternate is present on Lys-120. Lys-120 participates in a covalent cross-link: Glycyl lysine isopeptide (Lys-Gly) (interchain with G-Cter in ubiquitin); alternate. Lys-121 is covalently cross-linked (Glycyl lysine isopeptide (Lys-Gly) (interchain with G-Cter in ubiquitin)). A run of 4 beta stranded transmembrane segments spans residues 122–131 (SGKIKSSYKR), 134–141 (VNLGCDVD), 148–156 (AIHGSAVFG), and 161–169 (LAGYQMTFD). A Glycyl lysine isopeptide (Lys-Gly) (interchain with G-Cter in ubiquitin) cross-link involves residue Lys-172. Beta stranded transmembrane passes span 174-186 (KLTRNNFAVGYRT), 189-196 (FQLHTNVN), 200-209 (EFGGSIYQKV), 213-222 (LDTSVNLAWT), 229-238 (RFGIAAKYQL), and 242-249 (ASISAKVN). The residue at position 251 (Ser-251) is a Phosphoserine. NAD(+) contacts are provided by residues 253–255 (LIG) and 271–275 (SALVD). Transmembrane regions (beta stranded) follow at residues 253-262 (LIGVGYTQTL) and 265-274 (GVKLTLSALV). Lys-277 is subject to N6-acetyllysine; alternate. Residue Lys-277 forms a Glycyl lysine isopeptide (Lys-Gly) (interchain with G-Cter in ubiquitin); alternate linkage. A beta stranded membrane pass occupies residues 284–293 (HKLGLALELE).

It belongs to the eukaryotic mitochondrial porin family. Monomer, homodimer and higher order oligomers; formation of higher order structures is necessary for scramblase activity. Interacts with ARMC12 in a TBC1D21-dependent manner. Interacts with KLC3. Interacts with SPATA33. Interacts with PPP3CC in a SPATA33-dependent manner. Post-translationally, ubiquitinated by PRKN during mitophagy, leading to its degradation and enhancement of mitophagy. Deubiquitinated by USP30.

The protein resides in the mitochondrion outer membrane. The protein localises to the membrane. The catalysed reaction is chloride(in) = chloride(out). It carries out the reaction K(+)(in) = K(+)(out). It catalyses the reaction a 1,2-diacyl-sn-glycero-3-phospho-L-serine(in) = a 1,2-diacyl-sn-glycero-3-phospho-L-serine(out). The enzyme catalyses a 1,2-diacyl-sn-glycero-3-phosphocholine(in) = a 1,2-diacyl-sn-glycero-3-phosphocholine(out). The catalysed reaction is a 1,2-diacyl-sn-glycero-3-phospho-(1D-myo-inositol)(in) = a 1,2-diacyl-sn-glycero-3-phospho-(1D-myo-inositol)(out). In terms of biological role, non-selective voltage-gated ion channel that mediates the transport of anions and cations through the mitochondrion outer membrane and plasma membrane. The channel adopts an open conformation at zero mV and a closed conformation at both positive and negative potentials. There are two populations of channels; the main that functions in a lower open-state conductance with lower ion selectivity, that switch, in a voltage-dependent manner, from the open to a low-conducting 'closed' state and the other that has a normal ion selectivity in the typical high conductance, 'open' state. Binds various lipids, including the sphingolipid ceramide, the phospholipid phosphatidylcholine, and the sterols cholesterol and oxysterol. Binding of ceramide promotes the mitochondrial outer membrane permeabilization (MOMP) apoptotic pathway. Catalyzes the scrambling of phospholipids across the outer mitochondrial membrane; the mechanism is unrelated to channel activity and is capable of translocating both anionic and zwitterionic phospholipids. The sequence is that of Non-selective voltage-gated ion channel VDAC2 from Sus scrofa (Pig).